We begin with the raw amino-acid sequence, 317 residues long: Endochitinase 3 (317 aa).

The N-terminal stretch at 1–19 is a signal peptide; sequence MFVRNALVVTGLLAALTQA. Residues Asn25, Asn49, and Asn169 are each glycosylated (N-linked (GlcNAc...) asparagine). One can recognise a GH18 domain in the interval 29 to 317; the sequence is HKLTVYWGAE…NYQKEIKANL (289 aa). The active-site Proton donor is the Glu170. The N-linked (GlcNAc...) asparagine glycan is linked to Asn245.

Belongs to the glycosyl hydrolase 18 family. Chitinase class III subfamily.

The protein localises to the secreted. The enzyme catalyses Random endo-hydrolysis of N-acetyl-beta-D-glucosaminide (1-&gt;4)-beta-linkages in chitin and chitodextrins.. In terms of biological role, secreted chitinase involved in the degradation of chitin, a component of the cell walls of fungi and exoskeletal elements of some animals (including worms and arthropods). Participates in the infection process and directly acts in the penetration process of the host cuticle. Involved in heat-shock adaptation. The sequence is that of Endochitinase 3 (chi3) from Metarhizium robertsii (strain ARSEF 23 / ATCC MYA-3075) (Metarhizium anisopliae (strain ARSEF 23)).